The chain runs to 458 residues: Zinc finger protein 239 (458 aa).

K108 participates in a covalent cross-link: Glycyl lysine isopeptide (Lys-Gly) (interchain with G-Cter in SUMO2). Position 191 is a phosphoserine (S191). 9 C2H2-type zinc fingers span residues 207–229 (YECS…QRDH), 235–257 (YKCE…QAVH), 263–285 (YKCD…HAVH), 291–313 (YKCD…QRVH), 319–341 (YECE…QRVH), 347–369 (YKCG…RCIH), 375–397 (YQCY…LRVH), 403–425 (YHCG…QRVH), and 431–453 (YECS…QRVH).

The protein belongs to the krueppel C2H2-type zinc-finger protein family.

Its subcellular location is the nucleus. Functionally, may be involved in transcriptional regulation. This chain is Zinc finger protein 239 (ZNF239), found in Pongo abelii (Sumatran orangutan).